The chain runs to 427 residues: UDP-N-acetyl-D-mannosamine dehydrogenase (427 aa).

Residues Tyr19, Ile20, Asp39, Arg44, Thr91, and Thr130 each contribute to the NAD(+) site. Positions 155, 156, 207, 211, 214, 245, 247, and 258 each coordinate UDP-N-acetyl-alpha-D-mannosaminouronate. Residue Lys207 is the Proton donor/acceptor of the active site. The active-site Nucleophile is Cys261. Positions 318 and 319 each coordinate UDP-N-acetyl-alpha-D-mannosaminouronate. Residue Arg326 participates in NAD(+) binding. Lys404 is a binding site for UDP-N-acetyl-alpha-D-mannosaminouronate.

This sequence belongs to the UDP-glucose/GDP-mannose dehydrogenase family. As to quaternary structure, homotetramer; probably dimer of dimers.

It catalyses the reaction UDP-N-acetyl-alpha-D-mannosamine + 2 NAD(+) + H2O = UDP-N-acetyl-alpha-D-mannosaminouronate + 2 NADH + 3 H(+). Catalyzes the four-electron oxidation of UDP-N-acetyl-D-mannosamine (UDP-ManNAc), reducing NAD(+) and releasing UDP-N-acetylmannosaminuronic acid (UDP-ManNAcA). Cannot use NADP instead of NAD. This chain is UDP-N-acetyl-D-mannosamine dehydrogenase (wecC), found in Methanococcus maripaludis (strain DSM 14266 / JCM 13030 / NBRC 101832 / S2 / LL).